The chain runs to 256 residues: Dihydroorotate dehydrogenase B (NAD(+)), electron transfer subunit (256 aa).

Positions 1–101 (MKKAHLTVQS…LGPLGNGFPV (101 aa)) constitute an FAD-binding FR-type domain. FAD-binding positions include 52–55 (RPLS), 69–71 (IYR), and 76–77 (GT). [2Fe-2S] cluster contacts are provided by Cys-220, Cys-225, Cys-228, and Cys-243.

The protein belongs to the PyrK family. As to quaternary structure, heterotetramer of 2 PyrK and 2 PyrD type B subunits. It depends on [2Fe-2S] cluster as a cofactor. FAD is required as a cofactor.

It participates in pyrimidine metabolism; UMP biosynthesis via de novo pathway; orotate from (S)-dihydroorotate (NAD(+) route): step 1/1. Functionally, responsible for channeling the electrons from the oxidation of dihydroorotate from the FMN redox center in the PyrD type B subunit to the ultimate electron acceptor NAD(+). The polypeptide is Dihydroorotate dehydrogenase B (NAD(+)), electron transfer subunit (Bacillus velezensis (strain DSM 23117 / BGSC 10A6 / LMG 26770 / FZB42) (Bacillus amyloliquefaciens subsp. plantarum)).